The primary structure comprises 517 residues: Perilipin-1 (517 aa).

Residue S81 is modified to Phosphoserine. The residue at position 85 (T85) is a Phosphothreonine. S126, S130, S132, S137, and S174 each carry phosphoserine. Positions 195 to 216 are disordered; it reads DKESAPSSGRQRTQKAPKAKPS. Residues T223, T298, and T300 each carry the phosphothreonine modification. Residues 286–320 are disordered; it reads LAASQDESHDDQTDTEGEETDDEEEEEESEAEENV. Residues 290–321 are required for interaction with CIDEC; the sequence is QDESHDDQTDTEGEETDDEEEEEESEAEENVL. Positions 298 to 318 are enriched in acidic residues; the sequence is TDTEGEETDDEEEEEESEAEE. Phosphoserine occurs at positions 314, 384, 386, 410, 433, 439, 460, 492, and 494. The disordered stretch occupies residues 425–490; sequence SAEAERKGSG…AMPREKPARR (66 aa).

The protein belongs to the perilipin family. As to quaternary structure, interacts with ABHD5. Interacts with CIDEC. Interacts with AQP7. Major cAMP-dependent protein kinase-substrate in adipocytes, also dephosphorylated by PP1. When phosphorylated, may be maximally sensitive to HSL and when unphosphorylated, may play a role in the inhibition of lipolysis, by acting as a barrier in lipid droplet.

Its subcellular location is the endoplasmic reticulum. It is found in the lipid droplet. Modulator of adipocyte lipid metabolism. Coats lipid storage droplets to protect them from breakdown by hormone-sensitive lipase (HSL). Its absence may result in leanness. Plays a role in unilocular lipid droplet formation by activating CIDEC. Their interaction promotes lipid droplet enlargement and directional net neutral lipid transfer. May modulate lipolysis and triglyceride levels. The protein is Perilipin-1 (Plin1) of Mus musculus (Mouse).